A 178-amino-acid polypeptide reads, in one-letter code: Sec-independent protein translocase protein TatB (178 aa).

Residues 1 to 21 (MFDIGWSELLVIGVVALIAIG) form a helical membrane-spanning segment. Residues 146–178 (LAIVREIKPEPQPQPADGAAPAEPERLKDAKAS) are disordered. The segment covering 168 to 178 (EPERLKDAKAS) has biased composition (basic and acidic residues).

Belongs to the TatB family. In terms of assembly, the Tat system comprises two distinct complexes: a TatABC complex, containing multiple copies of TatA, TatB and TatC subunits, and a separate TatA complex, containing only TatA subunits. Substrates initially bind to the TatABC complex, which probably triggers association of the separate TatA complex to form the active translocon.

Its subcellular location is the cell inner membrane. Functionally, part of the twin-arginine translocation (Tat) system that transports large folded proteins containing a characteristic twin-arginine motif in their signal peptide across membranes. Together with TatC, TatB is part of a receptor directly interacting with Tat signal peptides. TatB may form an oligomeric binding site that transiently accommodates folded Tat precursor proteins before their translocation. In Bradyrhizobium sp. (strain ORS 278), this protein is Sec-independent protein translocase protein TatB.